The following is a 405-amino-acid chain: Angiopoietin-related protein 4 (405 aa).

The signal sequence occupies residues 1–23; sequence MRCAPTAGAALVLCAATAGLLSA. Positions 54–146 form a coiled coil; sequence GLREHVERTR…QNLQSQIDLL (93 aa). Asparagine 176 carries an N-linked (GlcNAc...) asparagine glycan. The Fibrinogen C-terminal domain occupies 178–400; that stretch reads TRLHRPPRDC…ATTLLIQPME (223 aa). An intrachain disulfide couples cysteine 187 to cysteine 215. 2 N-linked (GlcNAc...) asparagine glycosylation sites follow: asparagine 231 and asparagine 237. Cysteine 340 and cysteine 353 are oxidised to a cystine.

Homooligomer; disulfide-linked via Cys residues in the N-terminal part of the protein. The homooligomer undergoes proteolytic processing to release its carboxyl fibrinogen-like domain, which circulates as a monomer. The homooligomer unprocessed form is able to interact with the extracellular matrix. N-glycosylated. Post-translationally, forms disulfide-linked dimers and tetramers. In terms of processing, cleaved into a smaller N-terminal chain and a larger chain that contains the fibrinogen C-terminal domain; both cleaved and uncleaved forms are detected in the extracellular space. The cleaved form is not present within the cell.

It is found in the secreted. The protein resides in the extracellular space. The protein localises to the extracellular matrix. In terms of biological role, mediates inactivation of the lipoprotein lipase LPL, and thereby plays a role in the regulation of triglyceride clearance from the blood serum and in lipid metabolism. May also play a role in regulating glucose homeostasis and insulin sensitivity. Inhibits proliferation, migration, and tubule formation of endothelial cells and reduces vascular leakage. Upon heterologous expression, inhibits the adhesion of endothelial cell to the extracellular matrix (ECM), and inhibits the reorganization of the actin cytoskeleton, formation of actin stress fibers and focal adhesions in endothelial cells that have adhered to ANGPTL4-containing ECM (in vitro). Depending on context, may modulate tumor-related angiogenesis. Mediates inactivation of the lipoprotein lipase LPL, and thereby plays an important role in the regulation of triglyceride clearance from the blood serum and in lipid metabolism. Has higher activity in LPL inactivation than the uncleaved protein. This is Angiopoietin-related protein 4 (Angptl4) from Rattus norvegicus (Rat).